A 228-amino-acid chain; its full sequence is Thymidine kinase (228 aa).

23–30 (GNIGCGKS) contacts ATP. Glu-50 functions as the Proton acceptor in the catalytic mechanism. The substrate site is built by Tyr-68, Gln-79, and Phe-109. Arg-157 is an ATP binding site.

It belongs to the DCK/DGK family.

The enzyme catalyses thymidine + ATP = dTMP + ADP + H(+). In Ictaluridae (bullhead catfishes), this protein is Thymidine kinase (TK).